Consider the following 450-residue polypeptide: Putative zinc metalloprotease TP_0600 (450 aa).

H18 is a Zn(2+) binding site. The active site involves E19. H22 serves as a coordination point for Zn(2+). A helical transmembrane segment spans residues 102-124 (IAFAGPLANVLMAVMVLALVSAL). One can recognise a PDZ domain in the interval 200–278 (TITPDRDAHT…SVVLTVLRSG (79 aa)). Helical transmembrane passes span 384-406 (VCVS…LILF) and 421-443 (VLYY…AFWN).

This sequence belongs to the peptidase M50B family. Requires Zn(2+) as cofactor.

The protein resides in the cell inner membrane. In Treponema pallidum (strain Nichols), this protein is Putative zinc metalloprotease TP_0600.